The following is a 1335-amino-acid chain: Probable serine/threonine-protein kinase ndrC (1335 aa).

Disordered regions lie at residues Met-1–Ser-70, Val-85–Ser-158, Leu-276–Asn-447, and Thr-462–Lys-603. A compositionally biased stretch (polar residues) spans Asn-8–Glu-17. The span at Ser-27–Ser-41 shows a compositional bias: low complexity. The span at Arg-55–Ser-70 shows a compositional bias: basic residues. A compositionally biased stretch (low complexity) spans Ser-89–Ser-117. Residues Thr-118–Met-132 are compositionally biased toward polar residues. Positions Asn-133–Ser-153 are enriched in low complexity. Pro residues predominate over residues Leu-276 to Gln-288. Composition is skewed to low complexity over residues Ser-289 to Ser-331, Asn-345 to Lys-368, Ser-382 to Ser-396, Pro-412 to Ser-424, Pro-437 to Asn-447, and Thr-462 to Ser-484. Residues Asn-485–Leu-497 are compositionally biased toward polar residues. Residues Ser-498–Asn-507 are compositionally biased toward low complexity. The segment covering Gly-508 to Glu-528 has biased composition (polar residues). Residues Ser-540–Gly-566 show a composition bias toward low complexity. A compositionally biased stretch (basic and acidic residues) spans Lys-567–Leu-581. Low complexity predominate over residues Asn-586–Asn-602. Residues Asn-586 to Lys-613 adopt a coiled-coil conformation. Residues Phe-718 to Phe-1019 form the Protein kinase domain. ATP-binding positions include Ile-724–Val-732 and Lys-747. Asp-840 (proton acceptor) is an active-site residue. The 87-residue stretch at Lys-1020–Met-1106 folds into the AGC-kinase C-terminal domain. Low complexity predominate over residues Ser-1239 to Leu-1284. Positions Ser-1239–Ile-1313 are disordered. Residues Pro-1287–Ile-1313 show a composition bias toward basic and acidic residues. Positions Lys-1289–Ile-1325 form a coiled coil.

The protein belongs to the protein kinase superfamily. AGC Ser/Thr protein kinase family.

It catalyses the reaction L-seryl-[protein] + ATP = O-phospho-L-seryl-[protein] + ADP + H(+). The catalysed reaction is L-threonyl-[protein] + ATP = O-phospho-L-threonyl-[protein] + ADP + H(+). The chain is Probable serine/threonine-protein kinase ndrC (ndrC) from Dictyostelium discoideum (Social amoeba).